We begin with the raw amino-acid sequence, 344 residues long: Inositol 2-dehydrogenase/D-chiro-inositol 3-dehydrogenase (344 aa).

It belongs to the Gfo/Idh/MocA family. In terms of assembly, homotetramer.

It carries out the reaction myo-inositol + NAD(+) = scyllo-inosose + NADH + H(+). The enzyme catalyses 1D-chiro-inositol + NAD(+) = scyllo-inosine + NADH + H(+). The protein operates within polyol metabolism; myo-inositol degradation into acetyl-CoA; acetyl-CoA from myo-inositol: step 1/7. Its function is as follows. Involved in the oxidation of myo-inositol (MI) and D-chiro-inositol (DCI) to 2-keto-myo-inositol (2KMI or 2-inosose) and 1-keto-D-chiro-inositol (1KDCI), respectively. This Bacillus velezensis (strain DSM 23117 / BGSC 10A6 / LMG 26770 / FZB42) (Bacillus amyloliquefaciens subsp. plantarum) protein is Inositol 2-dehydrogenase/D-chiro-inositol 3-dehydrogenase.